A 552-amino-acid polypeptide reads, in one-letter code: Antibiotic resistance protein MAB_2355c (552 aa).

ABC transporter domains lie at 4–270 and 332–552; these read VQLD…RRWD and AKRA…PQWV. Residues 37–44 and 364–371 contribute to the ATP site; these read GPNGTGKT and GGNGTGKS.

The protein belongs to the ABC transporter superfamily. ABCF family.

It carries out the reaction ATP + H2O = ADP + phosphate + H(+). The ATPase activity can be inhibited by ribosome-targeting antibiotics. Its function is as follows. Exhibits ATP hydrolysis activity and contributes to macrolide resistance by ribosome protection. Can also hydrolyze GTP, TTP and CTP but to a lesser extent than ATP. In vitro, rescues the transcription and translation activities affected by macrolides. Increased expression correlates with increased resistance to clarithromycin, one of the main drugs used to treat M.abscessus. In Mycobacteroides abscessus (strain ATCC 19977 / DSM 44196 / CCUG 20993 / CIP 104536 / JCM 13569 / NCTC 13031 / TMC 1543 / L948) (Mycobacterium abscessus), this protein is Antibiotic resistance protein MAB_2355c.